The primary structure comprises 380 residues: Cytochrome b (380 aa).

Transmembrane regions (helical) follow at residues 34–54 (FGSL…LLAA), 78–99 (WLIR…YLHI), 114–134 (WNTG…GYVL), and 179–199 (FFAL…IHLA). H84 and H98 together coordinate heme b. Positions 183 and 197 each coordinate heme b. H202 lines the a ubiquinone pocket. The next 4 helical transmembrane spans lie at 227 to 247 (LKDI…ALFS), 289 to 309 (LGGV…PLLH), 321 to 341 (LSQL…WIGS), and 348 to 368 (FIII…ILFP).

This sequence belongs to the cytochrome b family. In terms of assembly, the cytochrome bc1 complex contains 11 subunits: 3 respiratory subunits (MT-CYB, CYC1 and UQCRFS1), 2 core proteins (UQCRC1 and UQCRC2) and 6 low-molecular weight proteins (UQCRH/QCR6, UQCRB/QCR7, UQCRQ/QCR8, UQCR10/QCR9, UQCR11/QCR10 and a cleavage product of UQCRFS1). This cytochrome bc1 complex then forms a dimer. Requires heme b as cofactor.

The protein localises to the mitochondrion inner membrane. In terms of biological role, component of the ubiquinol-cytochrome c reductase complex (complex III or cytochrome b-c1 complex) that is part of the mitochondrial respiratory chain. The b-c1 complex mediates electron transfer from ubiquinol to cytochrome c. Contributes to the generation of a proton gradient across the mitochondrial membrane that is then used for ATP synthesis. This is Cytochrome b (MT-CYB) from Cyrtonyx montezumae (Montezuma quail).